A 637-amino-acid polypeptide reads, in one-letter code: Threonine--tRNA ligase (637 aa).

In terms of domain architecture, TGS spans 1 to 61 (MLNITLPDGS…VEDSAVQIIT (61 aa)). Residues 242–533 (DHRKLGKQLD…LIENHAGSFP (292 aa)) form a catalytic region. Zn(2+) contacts are provided by Cys-333, His-384, and His-510.

It belongs to the class-II aminoacyl-tRNA synthetase family. Homodimer. The cofactor is Zn(2+).

It localises to the cytoplasm. The catalysed reaction is tRNA(Thr) + L-threonine + ATP = L-threonyl-tRNA(Thr) + AMP + diphosphate + H(+). Its function is as follows. Catalyzes the attachment of threonine to tRNA(Thr) in a two-step reaction: L-threonine is first activated by ATP to form Thr-AMP and then transferred to the acceptor end of tRNA(Thr). Also edits incorrectly charged L-seryl-tRNA(Thr). The protein is Threonine--tRNA ligase of Neisseria meningitidis serogroup A / serotype 4A (strain DSM 15465 / Z2491).